Here is a 1160-residue protein sequence, read N- to C-terminus: Carbamoyl phosphate synthase arginine-specific large chain, mitochondrial (1160 aa).

The tract at residues 81–478 (AEHEKVKKVV…SLQKALRQVD (398 aa)) is carboxyphosphate synthetic domain. ATP-binding residues include arginine 208, arginine 248, glycine 254, glycine 255, lysine 285, leucine 287, glutamate 292, glycine 318, isoleucine 319, histidine 320, glutamine 361, and glutamate 375. The ATP-grasp 1 domain occupies 212 to 404 (AKALNEINIP…LAYTAAKIAL (193 aa)). Positions 361, 375, and 377 each coordinate Mg(2+). Mn(2+) contacts are provided by glutamine 361, glutamate 375, and asparagine 377. The interval 479–623 (PSFLGFMAMP…YTSYNASSHD (145 aa)) is oligomerization domain. The tract at residues 624 to 1012 (IDFNEHGTMV…AYWAALQSTQ (389 aa)) is carbamoyl phosphate synthetic domain. Positions 748-946 (SQILDKIGVD…FIDVATRSII (199 aa)) constitute an ATP-grasp 2 domain. Arginine 784, lysine 823, isoleucine 825, glutamate 830, glycine 855, valine 856, histidine 857, serine 858, glutamine 898, and glutamate 917 together coordinate ATP. Glutamine 898, glutamate 917, and asparagine 919 together coordinate Mg(2+). Mn(2+) contacts are provided by glutamine 898, glutamate 917, and asparagine 919. The interval 1013-1144 (NFKIPLPGQG…PSVLSEKKEM (132 aa)) is allosteric domain. Positions 1014–1160 (FKIPLPGQGI…WSEWIGSHDL (147 aa)) constitute an MGS-like domain.

This sequence belongs to the CarB family. As to quaternary structure, heterodimer composed of 2 chains; the small (or glutamine) chain promotes the hydrolysis of glutamine to ammonia, which is used by the large (or ammonia) chain to synthesize carbamoyl phosphate. Mg(2+) is required as a cofactor. Requires Mn(2+) as cofactor.

The protein localises to the mitochondrion. It catalyses the reaction hydrogencarbonate + L-glutamine + 2 ATP + H2O = carbamoyl phosphate + L-glutamate + 2 ADP + phosphate + 2 H(+). It carries out the reaction hydrogencarbonate + NH4(+) + 2 ATP = carbamoyl phosphate + 2 ADP + phosphate + 2 H(+). Its pathway is amino-acid biosynthesis; L-arginine biosynthesis; carbamoyl phosphate from bicarbonate: step 1/1. In terms of biological role, large subunit of the arginine-specific carbamoyl phosphate synthase (CPSase). CPSase catalyzes the formation of carbamoyl phosphate from the ammonia moiety of glutamine, hydrogencarbonate, and phosphate donated by ATP, the first step of the arginine biosynthetic pathway. The large subunit (synthetase) binds the substrates ammonia (free or transferred from glutamine from the small subunit), hydrogencarbonate and ATP and carries out an ATP-coupled ligase reaction, activating hydrogencarbonate by forming carboxy phosphate which reacts with ammonia to form carbamoyl phosphate. This Schizosaccharomyces pombe (strain 972 / ATCC 24843) (Fission yeast) protein is Carbamoyl phosphate synthase arginine-specific large chain, mitochondrial (arg4).